The chain runs to 197 residues: Dehydrin DHN1 (197 aa).

The span at 1 to 14 (MSQYQNQYGAQTGM) shows a compositional bias: polar residues. Disordered regions lie at residues 1-86 (MSQY…GTNP) and 133-197 (GTEQ…CTGH). Tandem repeats lie at residues 16-21 (DEYGNP) and 26-31 (DQYGNP). Positions 16–31 (DEYGNPVNQVDQYGNP) are 2 X approximate repeats. The segment covering 74–83 (THTGGVGGYG) has biased composition (gly residues). Residues 126–133 (KIKEKIPG) form a 2-1 repeat. Residues 126 to 190 (KIKEKIPGTE…MDKIKEKLPG (65 aa)) form a 2 X approximate repeats region. The segment covering 144-160 (AGYGSTGYGASGGGIGN) has biased composition (gly residues). Residues 165–188 (YVREEHRVDHGEKKGIMDKIKEKL) show a composition bias toward basic and acidic residues. The stretch at 183-190 (KIKEKLPG) is one 2-2 repeat.

Belongs to the plant dehydrin family. Shoots, roots, and cotyledon from dehydrating seedlings.

This is Dehydrin DHN1 (DHN1) from Pisum sativum (Garden pea).